Consider the following 627-residue polypeptide: Chaperone protein HtpG (627 aa).

The interval 1–339 (MKGQETRGFQ…SNDLPLNVSR (339 aa)) is a; substrate-binding. The segment at 340–555 (EILQDSRVTQ…ADEMSTQMAK (216 aa)) is b. The tract at residues 556–627 (LFAAAGQQAP…IRRMNQLLSA (72 aa)) is c.

It belongs to the heat shock protein 90 family. As to quaternary structure, homodimer.

It localises to the cytoplasm. Functionally, molecular chaperone. Has ATPase activity. In Pectobacterium atrosepticum (strain SCRI 1043 / ATCC BAA-672) (Erwinia carotovora subsp. atroseptica), this protein is Chaperone protein HtpG.